The primary structure comprises 89 residues: Small ribosomal subunit protein uS14 (89 aa).

The protein belongs to the universal ribosomal protein uS14 family. As to quaternary structure, part of the 30S ribosomal subunit. Contacts proteins S3 and S10.

Functionally, binds 16S rRNA, required for the assembly of 30S particles and may also be responsible for determining the conformation of the 16S rRNA at the A site. The sequence is that of Small ribosomal subunit protein uS14 from Chlorobaculum parvum (strain DSM 263 / NCIMB 8327) (Chlorobium vibrioforme subsp. thiosulfatophilum).